We begin with the raw amino-acid sequence, 148 residues long: Lysozyme C, milk isozyme (148 aa).

Residues 1–18 (MKALLIVGLLLLSVAVQG) form the signal peptide. Residues 19–148 (KKFQRCELAR…LRSYVQGCRV (130 aa)) enclose the C-type lysozyme domain. Disulfide bonds link C24-C146, C48-C134, C83-C99, and C95-C113. Residues E53 and D71 contribute to the active site.

The protein belongs to the glycosyl hydrolase 22 family.

It carries out the reaction Hydrolysis of (1-&gt;4)-beta-linkages between N-acetylmuramic acid and N-acetyl-D-glucosamine residues in a peptidoglycan and between N-acetyl-D-glucosamine residues in chitodextrins.. Lysozymes have primarily a bacteriolytic function; those in tissues and body fluids are associated with the monocyte-macrophage system and enhance the activity of immunoagents. In Bos taurus (Bovine), this protein is Lysozyme C, milk isozyme.